We begin with the raw amino-acid sequence, 68 residues long: DNA-directed RNA polymerase subunit Rpo10 (68 aa).

Zn(2+)-binding residues include C7, C10, C44, and C45.

The protein belongs to the archaeal Rpo10/eukaryotic RPB10 RNA polymerase subunit family. In terms of assembly, part of the RNA polymerase complex. Zn(2+) serves as cofactor.

It localises to the cytoplasm. The enzyme catalyses RNA(n) + a ribonucleoside 5'-triphosphate = RNA(n+1) + diphosphate. In terms of biological role, DNA-dependent RNA polymerase (RNAP) catalyzes the transcription of DNA into RNA using the four ribonucleoside triphosphates as substrates. The chain is DNA-directed RNA polymerase subunit Rpo10 from Methanococcus maripaludis (strain C6 / ATCC BAA-1332).